A 201-amino-acid polypeptide reads, in one-letter code: Small ribosomal subunit protein uS4c (201 aa).

A disordered region spans residues Arg14–Gln43. In terms of domain architecture, S4 RNA-binding spans Met89 to Leu169.

The protein belongs to the universal ribosomal protein uS4 family. In terms of assembly, part of the 30S ribosomal subunit. Contacts protein S5. The interaction surface between S4 and S5 is involved in control of translational fidelity.

It is found in the plastid. The protein localises to the chloroplast. One of the primary rRNA binding proteins, it binds directly to 16S rRNA where it nucleates assembly of the body of the 30S subunit. In terms of biological role, with S5 and S12 plays an important role in translational accuracy. This chain is Small ribosomal subunit protein uS4c (rps4), found in Gossypium hirsutum (Upland cotton).